Consider the following 311-residue polypeptide: Ferritin-like catalase Nec2 (311 aa).

A signal peptide spans 1 to 25 (MAFLSNMAMFITMLMFSSMMHPCFS). Asparagine 128, asparagine 257, and asparagine 289 each carry an N-linked (GlcNAc...) asparagine glycan.

As to quaternary structure, forms homomultimers. As to expression, observed in all flowers organs; mainly expressed in nectaries and, to a lower extent, in petals and ovules, as well as in stigmas and calyx at low levels.

It carries out the reaction 2 H2O2 = O2 + 2 H2O. Functionally, involved in the production of blood-red nectar containing the alkaloid nesocodin and that serves as a visual attractant for pollinator visitation, including vertebrates such as Phelsuma geckos. The nectar is initially acidic and pale yellow, but slowly becomes alkaline before turning into red within 24 hours. Together with NEC1 and NEC3, facilitates the condensation of sinapaldehyde ((E)-3,5-dimethoxy-4-hydroxycinnamaldehyde) and proline to form nesocodin, a pigment with a stable imine bond. Protects nesocodin from degradation by hydrogen peroxide H(2)O(2) by catalyzing the degradation of H(2)O(2) into water H(2)O and dioxygene O(2). This chain is Ferritin-like catalase Nec2, found in Nesocodon mauritianus (Blue Mauritius bellflower).